Consider the following 877-residue polypeptide: Alanine--tRNA ligase (877 aa).

The Zn(2+) site is built by H564, H568, C666, and H670.

Belongs to the class-II aminoacyl-tRNA synthetase family. Requires Zn(2+) as cofactor.

The protein resides in the cytoplasm. The catalysed reaction is tRNA(Ala) + L-alanine + ATP = L-alanyl-tRNA(Ala) + AMP + diphosphate. Its function is as follows. Catalyzes the attachment of alanine to tRNA(Ala) in a two-step reaction: alanine is first activated by ATP to form Ala-AMP and then transferred to the acceptor end of tRNA(Ala). Also edits incorrectly charged Ser-tRNA(Ala) and Gly-tRNA(Ala) via its editing domain. The protein is Alanine--tRNA ligase of Pelotomaculum thermopropionicum (strain DSM 13744 / JCM 10971 / SI).